The chain runs to 280 residues: Nuclear egress protein 1 (280 aa).

Residues 86 to 203 (CLTLSPYGHS…YIIFTSLTLH (118 aa)) form a CCCH-type zinc finger.

The protein belongs to the herpesviridae NEC1 protein family. In terms of assembly, forms a heterohexameric complex with NEC2. Interacts with capsid vertex specific component 2/CVC2; this interaction directs the capsid to the host inner nuclear membrane to initiate budding. In terms of processing, phosphorylated at serine residues in the N-terminus. This phosphorylation regulates the localization within the inner nuclear membrane.

It localises to the host nucleus inner membrane. Plays an essential role in virion nuclear egress, the first step of virion release from infected cell. Within the host nucleus, NEC1 interacts with the newly formed capsid through the vertexes and directs it to the inner nuclear membrane by associating with NEC2. Induces the budding of the capsid at the inner nuclear membrane as well as its envelopment into the perinuclear space. There, the NEC1/NEC2 complex promotes the fusion of the enveloped capsid with the outer nuclear membrane and the subsequent release of the viral capsid into the cytoplasm where it will reach the secondary budding sites in the host Golgi or trans-Golgi network. This is Nuclear egress protein 1 from Alcelaphine herpesvirus 1 (strain C500) (AlHV-1).